The following is an 87-amino-acid chain: DNA-directed RNA polymerase subunit omega (87 aa).

Belongs to the RNA polymerase subunit omega family. As to quaternary structure, the RNAP catalytic core consists of 2 alpha, 1 beta, 1 beta' and 1 omega subunit. When a sigma factor is associated with the core the holoenzyme is formed, which can initiate transcription.

It catalyses the reaction RNA(n) + a ribonucleoside 5'-triphosphate = RNA(n+1) + diphosphate. Functionally, promotes RNA polymerase assembly. Latches the N- and C-terminal regions of the beta' subunit thereby facilitating its interaction with the beta and alpha subunits. The protein is DNA-directed RNA polymerase subunit omega of Azotobacter vinelandii (strain DJ / ATCC BAA-1303).